The following is a 154-amino-acid chain: 3-hydroxyacyl-[acyl-carrier-protein] dehydratase FabZ (154 aa).

The active site involves H59.

The protein belongs to the thioester dehydratase family. FabZ subfamily.

The protein localises to the cytoplasm. It catalyses the reaction a (3R)-hydroxyacyl-[ACP] = a (2E)-enoyl-[ACP] + H2O. Its function is as follows. Involved in unsaturated fatty acids biosynthesis. Catalyzes the dehydration of short chain beta-hydroxyacyl-ACPs and long chain saturated and unsaturated beta-hydroxyacyl-ACPs. The sequence is that of 3-hydroxyacyl-[acyl-carrier-protein] dehydratase FabZ from Bartonella bacilliformis (strain ATCC 35685 / KC583 / Herrer 020/F12,63).